We begin with the raw amino-acid sequence, 571 residues long: MRTSKYLLSTLKETPNDAEVVSHQLMLRAGMIRRLASGLYTWLPTGLRVLRKVENIVRQEIDNAGAIETLMPVVQPFELWEETGRSEKMGPELLRFTDRHVRPFVLSPTAEEVITSLVRNEVSSYKQLPLNLYQIQTKFRDERRPRFGVMRAREFCMMDAYSFDIDKEGLQKSYDAMHDAYCKAFDRMGLEYRPVLADSGAIGGSGSQEFHVLAESGEDLIAFSTESDYAANIEKAEAVAPTAERAAPTQEMTTVDTPNAKTIAELVEQHGIAIEKTVKTLFVKASDDVDADIIALIIRGDHELNEVKAENLPQVASPLEMADEAQLRDLIGAGAGSLGPVGLELPFIVDRSVAVMSDFGTGANIDGKHFFGVNWDRDVQLGQVEDLRNVVEGDPSPCGKGTLQLKRGIEVGHIFQLGTAYSEAMNCGVLDANGKNVILEMGCYGIGVSRVVASAIEQNNDEYGIVWPEAIAPFTVAIVPMNMHKSERVKEAAEKLYAELTAMGIEVLFDDRKERPGVMFKDIELIGIPHTIVIGDRSMDEGNFEYKNRRANTKEAVEMANIVEHIKAQLS.

The protein belongs to the class-II aminoacyl-tRNA synthetase family. ProS type 1 subfamily. Homodimer.

Its subcellular location is the cytoplasm. The enzyme catalyses tRNA(Pro) + L-proline + ATP = L-prolyl-tRNA(Pro) + AMP + diphosphate. Catalyzes the attachment of proline to tRNA(Pro) in a two-step reaction: proline is first activated by ATP to form Pro-AMP and then transferred to the acceptor end of tRNA(Pro). As ProRS can inadvertently accommodate and process non-cognate amino acids such as alanine and cysteine, to avoid such errors it has two additional distinct editing activities against alanine. One activity is designated as 'pretransfer' editing and involves the tRNA(Pro)-independent hydrolysis of activated Ala-AMP. The other activity is designated 'posttransfer' editing and involves deacylation of mischarged Ala-tRNA(Pro). The misacylated Cys-tRNA(Pro) is not edited by ProRS. This Aliivibrio fischeri (strain MJ11) (Vibrio fischeri) protein is Proline--tRNA ligase.